The sequence spans 186 residues: Mating-type-like protein ALPHA2 (186 aa).

Residues 108–170 (ASYRGHRFTR…NRRRKQKSIY (63 aa)) constitute a DNA-binding region (homeobox; TALE-type).

It belongs to the TALE/M-ATYP homeobox family.

The protein resides in the nucleus. In terms of biological role, mating type proteins are sequence specific DNA-binding proteins that act as master switches in yeast differentiation by controlling gene expression in a cell type-specific fashion. The protein is Mating-type-like protein ALPHA2 (MTL1ALPHA2) of Candida glabrata (strain ATCC 2001 / BCRC 20586 / JCM 3761 / NBRC 0622 / NRRL Y-65 / CBS 138) (Yeast).